The chain runs to 134 residues: Replication enhancer protein (134 aa).

Belongs to the geminiviridae replication enhancer protein family. Homooligomer. Interacts with the replication-associated protein (REP). Interacts with host proliferating cell nuclear antigen (PCNA). Interacts with host retinoblastoma-related protein 1 (RBR1), and may thereby deregulate the host cell cycle. Oligomerization and interaction with PCNA are necessary for optimal replication enhancement.

Its function is as follows. Increases viral DNA accumulation. Enhances infectivity and symptom expression. The chain is Replication enhancer protein from Tomato yellow leaf curl Sardinia virus (TYLCSV).